Reading from the N-terminus, the 485-residue chain is Taxane 13-alpha-hydroxylase (485 aa).

Cysteine 431 contacts heme.

Belongs to the cytochrome P450 family. It depends on heme as a cofactor.

It carries out the reaction taxa-4(20),11-dien-5alpha-ol + reduced [NADPH--hemoprotein reductase] + O2 = taxa-4(20),11-dien-5alpha,13alpha-diol + oxidized [NADPH--hemoprotein reductase] + H2O + H(+). It participates in alkaloid biosynthesis; taxol biosynthesis. Involved in the transformation of a taxadienyl acetate by hydroxylation at C13 to yield taxadien-5-alpha-acetoxy-13-alpha-ol. This Taxus cuspidata (Japanese yew) protein is Taxane 13-alpha-hydroxylase (CYP725A2).